The primary structure comprises 156 residues: ATP synthase subunit b (156 aa).

Residues 5 to 27 (ITLIGQMITFAIFVGFTMKFVWP) form a helical membrane-spanning segment.

It belongs to the ATPase B chain family. F-type ATPases have 2 components, F(1) - the catalytic core - and F(0) - the membrane proton channel. F(1) has five subunits: alpha(3), beta(3), gamma(1), delta(1), epsilon(1). F(0) has three main subunits: a(1), b(2) and c(10-14). The alpha and beta chains form an alternating ring which encloses part of the gamma chain. F(1) is attached to F(0) by a central stalk formed by the gamma and epsilon chains, while a peripheral stalk is formed by the delta and b chains.

It is found in the cell inner membrane. In terms of biological role, f(1)F(0) ATP synthase produces ATP from ADP in the presence of a proton or sodium gradient. F-type ATPases consist of two structural domains, F(1) containing the extramembraneous catalytic core and F(0) containing the membrane proton channel, linked together by a central stalk and a peripheral stalk. During catalysis, ATP synthesis in the catalytic domain of F(1) is coupled via a rotary mechanism of the central stalk subunits to proton translocation. Component of the F(0) channel, it forms part of the peripheral stalk, linking F(1) to F(0). The protein is ATP synthase subunit b of Francisella philomiragia subsp. philomiragia (strain ATCC 25017 / CCUG 19701 / FSC 153 / O#319-036).